The primary structure comprises 117 residues: Large ribosomal subunit protein bL17 (117 aa).

It belongs to the bacterial ribosomal protein bL17 family. Part of the 50S ribosomal subunit. Contacts protein L32.

This chain is Large ribosomal subunit protein bL17, found in Endomicrobium trichonymphae.